The primary structure comprises 1070 residues: Carbamoyl phosphate synthase large chain (1070 aa).

The tract at residues 1–401 is carboxyphosphate synthetic domain; sequence MPKRDDIKTI…ALLKAVRSLE (401 aa). ATP is bound by residues Arg-129, Arg-169, Gly-175, Gly-176, Lys-208, Ile-210, Glu-215, Gly-241, Ile-242, His-243, Gln-284, and Glu-298. The ATP-grasp 1 domain maps to 133-327; it reads RDLMNELGEP…IAKLAAKIAV (195 aa). Residues Gln-284, Glu-298, and Asn-300 each contribute to the Mg(2+) site. Gln-284, Glu-298, and Asn-300 together coordinate Mn(2+). Positions 402-546 are oligomerization domain; the sequence is IGADHLLLEE…YSTYEEENES (145 aa). The carbamoyl phosphate synthetic domain stretch occupies residues 547–929; that stretch reads TRSAKESVIV…ALYKGFVASG (383 aa). The region spanning 671 to 861 is the ATP-grasp 2 domain; sequence EKALEILQIP…MANVATRVIL (191 aa). 10 residues coordinate ATP: Arg-707, Arg-746, Val-748, Glu-752, Gly-777, Val-778, His-779, Ser-780, Gln-820, and Glu-832. Mg(2+)-binding residues include Gln-820, Glu-832, and Asn-834. 3 residues coordinate Mn(2+): Gln-820, Glu-832, and Asn-834. Residues 930 to 1070 enclose the MGS-like domain; the sequence is TTMHDYGTVL…SEVKQPKARV (141 aa). Residues 930–1070 form an allosteric domain region; the sequence is TTMHDYGTVL…SEVKQPKARV (141 aa).

The protein belongs to the CarB family. As to quaternary structure, composed of two chains; the small (or glutamine) chain promotes the hydrolysis of glutamine to ammonia, which is used by the large (or ammonia) chain to synthesize carbamoyl phosphate. Tetramer of heterodimers (alpha,beta)4. Mg(2+) is required as a cofactor. It depends on Mn(2+) as a cofactor.

It carries out the reaction hydrogencarbonate + L-glutamine + 2 ATP + H2O = carbamoyl phosphate + L-glutamate + 2 ADP + phosphate + 2 H(+). It catalyses the reaction hydrogencarbonate + NH4(+) + 2 ATP = carbamoyl phosphate + 2 ADP + phosphate + 2 H(+). It participates in amino-acid biosynthesis; L-arginine biosynthesis; carbamoyl phosphate from bicarbonate: step 1/1. It functions in the pathway pyrimidine metabolism; UMP biosynthesis via de novo pathway; (S)-dihydroorotate from bicarbonate: step 1/3. Its function is as follows. Large subunit of the glutamine-dependent carbamoyl phosphate synthetase (CPSase). CPSase catalyzes the formation of carbamoyl phosphate from the ammonia moiety of glutamine, carbonate, and phosphate donated by ATP, constituting the first step of 2 biosynthetic pathways, one leading to arginine and/or urea and the other to pyrimidine nucleotides. The large subunit (synthetase) binds the substrates ammonia (free or transferred from glutamine from the small subunit), hydrogencarbonate and ATP and carries out an ATP-coupled ligase reaction, activating hydrogencarbonate by forming carboxy phosphate which reacts with ammonia to form carbamoyl phosphate. This is Carbamoyl phosphate synthase large chain from Listeria monocytogenes serotype 4b (strain F2365).